Here is a 499-residue protein sequence, read N- to C-terminus: tRNA (guanine(37)-N(1))-methyltransferase (499 aa).

The transit peptide at 1–44 directs the protein to the mitochondrion; sequence MKIALPVFQKFNRLISSCKMSGVFPYNPPVNRQMRELDRSFFIT. S-adenosyl-L-methionine contacts are provided by residues His268, 307–308, 335–336, and Asn399; these read DL and DG.

It belongs to the class I-like SAM-binding methyltransferase superfamily. TRM5/TYW2 family. Monomer.

It is found in the mitochondrion matrix. The protein localises to the nucleus. It localises to the cytoplasm. The catalysed reaction is guanosine(37) in tRNA + S-adenosyl-L-methionine = N(1)-methylguanosine(37) in tRNA + S-adenosyl-L-homocysteine + H(+). In terms of biological role, specifically methylates the N1 position of guanosine-37 in various cytoplasmic and mitochondrial tRNAs. Methylation is not dependent on the nature of the nucleoside 5' of the target nucleoside. This is the first step in the biosynthesis of wybutosine (yW), a modified base adjacent to the anticodon of tRNAs and required for accurate decoding. Postspliced cytoplasmic tRNAs are imported into the nucleus, where this first step seems to take place, after which they are reexported to the cytoplasm, where the yW sythesis is completed by cytoplasmic enzymes. The sequence is that of tRNA (guanine(37)-N(1))-methyltransferase from Saccharomyces cerevisiae (strain ATCC 204508 / S288c) (Baker's yeast).